The chain runs to 464 residues: tRNA-2-methylthio-N(6)-dimethylallyladenosine synthase (464 aa).

One can recognise an MTTase N-terminal domain in the interval 4-119 (RTFHIMTFGC…APQAIERLVQ (116 aa)). The [4Fe-4S] cluster site is built by C13, C48, C82, C158, C162, and C165. The Radical SAM core domain occupies 144 to 375 (GEVPVSAYVN…QEVQNEYSEA (232 aa)). The TRAM domain maps to 378–461 (QAMVGKTVMV…KHSLTGEPAG (84 aa)). The interval 393–420 (SPKSAAGSGTDAQNAAEESGRTASSWQG) is disordered.

It belongs to the methylthiotransferase family. MiaB subfamily. Monomer. Requires [4Fe-4S] cluster as cofactor.

The protein resides in the cytoplasm. It carries out the reaction N(6)-dimethylallyladenosine(37) in tRNA + (sulfur carrier)-SH + AH2 + 2 S-adenosyl-L-methionine = 2-methylsulfanyl-N(6)-dimethylallyladenosine(37) in tRNA + (sulfur carrier)-H + 5'-deoxyadenosine + L-methionine + A + S-adenosyl-L-homocysteine + 2 H(+). Catalyzes the methylthiolation of N6-(dimethylallyl)adenosine (i(6)A), leading to the formation of 2-methylthio-N6-(dimethylallyl)adenosine (ms(2)i(6)A) at position 37 in tRNAs that read codons beginning with uridine. This chain is tRNA-2-methylthio-N(6)-dimethylallyladenosine synthase, found in Oleidesulfovibrio alaskensis (strain ATCC BAA-1058 / DSM 17464 / G20) (Desulfovibrio alaskensis).